Consider the following 334-residue polypeptide: Glucokinase-like protein XF_1460 (334 aa).

18–23 (ADVGGT) is a binding site for ATP.

It belongs to the bacterial glucokinase family.

The protein is Glucokinase-like protein XF_1460 of Xylella fastidiosa (strain 9a5c).